The sequence spans 172 residues: Type II secretion system protein H (172 aa).

The propeptide at 1-6 (MRASRG) is leader sequence. F7 carries the N-methylphenylalanine modification. Residues 7-27 (FTLIELMVVMVIISVLIGLAV) form a helical membrane-spanning segment.

Belongs to the GSP H family. Type II secretion is composed of four main components: the outer membrane complex, the inner membrane complex, the cytoplasmic secretion ATPase and the periplasm-spanning pseudopilus. Forms the tip of the type II pseudopilus by interacting with XcpV, XcpW and XcpX. Interacts with core component XcpT. Post-translationally, cleaved by prepilin peptidase. In terms of processing, methylated by prepilin peptidase at the amino group of the N-terminal phenylalanine once the leader sequence is cleaved by prepilin peptidase.

It localises to the cell inner membrane. Component of the type II secretion system required for the energy-dependent secretion of extracellular factors such as proteases and toxins from the periplasm. Part of the pseudopilus tip complex that is critical for the recognition and binding of secretion substrates. Type II pseudopilus confers increased bacterial adhesive capabilities. The protein is Type II secretion system protein H (xcpU) of Pseudomonas aeruginosa (strain ATCC 15692 / DSM 22644 / CIP 104116 / JCM 14847 / LMG 12228 / 1C / PRS 101 / PAO1).